We begin with the raw amino-acid sequence, 77 residues long: uncharacterized protein (77 aa).

The span at 1–10 (MFNNKGRRNV) shows a compositional bias: basic residues. The interval 1 to 21 (MFNNKGRRNVRNNEVRRNVPV) is disordered. The segment covering 11–21 (RNNEVRRNVPV) has biased composition (basic and acidic residues). The TRAM domain maps to 20 to 77 (PVKEGETYTVTIEDMGRGGDGIARVEGFVVFVPETQKGETVNVKITAVKSKFAFAEKI).

This is an uncharacterized protein from Methanocaldococcus jannaschii (strain ATCC 43067 / DSM 2661 / JAL-1 / JCM 10045 / NBRC 100440) (Methanococcus jannaschii).